We begin with the raw amino-acid sequence, 493 residues long: Sulfoacetaldehyde dehydrogenase (acylating) (493 aa).

A compositionally biased stretch (basic residues) spans 1 to 10 (MSVQILHRRQ). Residues 1–21 (MSVQILHRRQSNNSDLPLPTA) are disordered. The active-site Nucleophile is Cys-273.

Belongs to the aldehyde dehydrogenase family. As to quaternary structure, homodimer.

The protein localises to the cytoplasm. The enzyme catalyses sulfoacetaldehyde + NADP(+) + CoA = sulfoacetyl-CoA + NADPH + H(+). Its function is as follows. Involved in the degradation of sulfoacetate, a widespread natural product. Catalyzes the conversion of sulfoacetyl-CoA and NADPH to sulfoacetaldehyde, CoA and NADP(+). Specific for NADP(+) and sulfoacetaldehyde. This Cupriavidus necator (strain ATCC 17699 / DSM 428 / KCTC 22496 / NCIMB 10442 / H16 / Stanier 337) (Ralstonia eutropha) protein is Sulfoacetaldehyde dehydrogenase (acylating).